Consider the following 443-residue polypeptide: Protoheme IX farnesyltransferase, mitochondrial (443 aa).

Residues 68 to 113 form a disordered region; sequence LSQRVKPKPEPPASPFLEHTSSGQARADEDELPSFPAPSRPLSRKP. The next 7 helical transmembrane spans lie at 174–194, 230–250, 252–272, 286–306, 308–328, 363–383, and 410–430; these read AGFALAPGPFDWSCFLLTSLG, ISPLLAVSFATCCAVPGVALL, WGVNPLTGALGVFNIFLYTCC, VGAVVGAIPPVMGWTAATGSL, AGALLLGGILYSWQFPHFNAL, LIALSTAAPVLDITTWVFPVI, and LFFCSLWHLPLLLLLMLTCKQ.

Belongs to the UbiA prenyltransferase family.

Its subcellular location is the mitochondrion membrane. The catalysed reaction is heme b + (2E,6E)-farnesyl diphosphate + H2O = Fe(II)-heme o + diphosphate. Its function is as follows. Converts protoheme IX and farnesyl diphosphate to heme O. The chain is Protoheme IX farnesyltransferase, mitochondrial (Cox10) from Mus musculus (Mouse).